The chain runs to 388 residues: Alanine racemase, catabolic (388 aa).

Lys46 functions as the Proton acceptor; specific for D-alanine in the catalytic mechanism. An N6-(pyridoxal phosphate)lysine modification is found at Lys46. Position 145 (Arg145) interacts with substrate. Tyr267 serves as the catalytic Proton acceptor; specific for L-alanine. Met315 lines the substrate pocket.

Belongs to the alanine racemase family. It depends on pyridoxal 5'-phosphate as a cofactor.

The enzyme catalyses L-alanine = D-alanine. Its function is as follows. Isomerizes L-alanine to D-alanine which is then oxidized to pyruvate by DadA. In Agrobacterium fabrum (strain C58 / ATCC 33970) (Agrobacterium tumefaciens (strain C58)), this protein is Alanine racemase, catabolic (dadB).